We begin with the raw amino-acid sequence, 95 residues long: Aspartyl/glutamyl-tRNA(Asn/Gln) amidotransferase subunit C (95 aa).

Belongs to the GatC family. Heterotrimer of A, B and C subunits.

The catalysed reaction is L-glutamyl-tRNA(Gln) + L-glutamine + ATP + H2O = L-glutaminyl-tRNA(Gln) + L-glutamate + ADP + phosphate + H(+). The enzyme catalyses L-aspartyl-tRNA(Asn) + L-glutamine + ATP + H2O = L-asparaginyl-tRNA(Asn) + L-glutamate + ADP + phosphate + 2 H(+). Functionally, allows the formation of correctly charged Asn-tRNA(Asn) or Gln-tRNA(Gln) through the transamidation of misacylated Asp-tRNA(Asn) or Glu-tRNA(Gln) in organisms which lack either or both of asparaginyl-tRNA or glutaminyl-tRNA synthetases. The reaction takes place in the presence of glutamine and ATP through an activated phospho-Asp-tRNA(Asn) or phospho-Glu-tRNA(Gln). In Lysinibacillus sphaericus (strain C3-41), this protein is Aspartyl/glutamyl-tRNA(Asn/Gln) amidotransferase subunit C.